A 203-amino-acid polypeptide reads, in one-letter code: LexA repressor (203 aa).

The H-T-H motif DNA-binding region spans 30–50 (VREICQAVSLKSTSTVHGHLK). Active-site for autocatalytic cleavage activity residues include Ser-127 and Lys-164.

It belongs to the peptidase S24 family. As to quaternary structure, homodimer.

The catalysed reaction is Hydrolysis of Ala-|-Gly bond in repressor LexA.. In terms of biological role, represses a number of genes involved in the response to DNA damage (SOS response), including recA and lexA. In the presence of single-stranded DNA, RecA interacts with LexA causing an autocatalytic cleavage which disrupts the DNA-binding part of LexA, leading to derepression of the SOS regulon and eventually DNA repair. This is LexA repressor from Clostridium perfringens (strain ATCC 13124 / DSM 756 / JCM 1290 / NCIMB 6125 / NCTC 8237 / Type A).